The primary structure comprises 163 residues: Phosphopantetheine adenylyltransferase (163 aa).

Threonine 10 contacts substrate. Residues 10-11 (TF) and histidine 18 contribute to the ATP site. 3 residues coordinate substrate: lysine 42, leucine 74, and arginine 88. Residues 89–91 (GLR), glutamate 99, and 124–130 (NSFISST) contribute to the ATP site.

It belongs to the bacterial CoaD family. In terms of assembly, homohexamer. Mg(2+) serves as cofactor.

It localises to the cytoplasm. The enzyme catalyses (R)-4'-phosphopantetheine + ATP + H(+) = 3'-dephospho-CoA + diphosphate. Its pathway is cofactor biosynthesis; coenzyme A biosynthesis; CoA from (R)-pantothenate: step 4/5. In terms of biological role, reversibly transfers an adenylyl group from ATP to 4'-phosphopantetheine, yielding dephospho-CoA (dPCoA) and pyrophosphate. The polypeptide is Phosphopantetheine adenylyltransferase (Shewanella putrefaciens (strain CN-32 / ATCC BAA-453)).